The primary structure comprises 302 residues: S-crystallin SL4 (302 aa).

A run of 3 repeats spans residues 45–54 (GGYAVQSRGD), 55–64 (GGYYVKSRGD), and 65–74 (GGYPVQGRGD). A 4 X approximate tandem repeats of G-G-Y-[AYP]-V-[QK]-[SG]-R-G-D region spans residues 45–84 (GGYAVQSRGDGGYYVKSRGDGGYPVQGRGDTGYSSQTRSD). 3 consecutive short sequence motifs (cell attachment site) follow at residues 52 to 54 (RGD), 62 to 64 (RGD), and 72 to 74 (RGD). Residues 68-92 (PVQGRGDTGYSSQTRSDDACLGQGR) form a disordered region. The 4; approximate repeat unit spans residues 75 to 84 (TGYSSQTRSD). A Cell attachment site motif is present at residues 113–115 (RGD). The interval 118–205 (SDINSGLYSG…ESASRRSRNH (88 aa)) is disordered. 2 stretches are compositionally biased toward basic and acidic residues: residues 129-166 (RMDDSCHTSESRRMDDPCGTDESRRLDVPCHSDDHYRS) and 177-192 (AEDRRGGHSDSHRIDI). In terms of domain architecture, GST C-terminal spans 183–302 (GHSDSHRIDI…YIKRRYQSDF (120 aa)).

This sequence belongs to the GST superfamily.

Its function is as follows. S-crystallins are structural components of squids and octopi eye lens. The sequence is that of S-crystallin SL4 from Nototodarus sloanii (Wellington flying squid).